Reading from the N-terminus, the 86-residue chain is Neurotoxin-like protein pMD18-NTL3 (86 aa).

Positions 1–21 (MKTLLLTLVVLTIACLDLGYT) are cleaved as a signal peptide. Intrachain disulfides connect Cys24–Cys45, Cys38–Cys62, Cys66–Cys78, and Cys79–Cys84.

This sequence belongs to the three-finger toxin family. Short-chain subfamily. Orphan group IX sub-subfamily. As to expression, expressed by the venom gland.

It localises to the secreted. This Bungarus multicinctus (Many-banded krait) protein is Neurotoxin-like protein pMD18-NTL3.